The following is a 285-amino-acid chain: Energy-coupling factor transporter ATP-binding protein EcfA2 (285 aa).

One can recognise an ABC transporter domain in the interval 3–245; it reads IKFKKVDYIY…RKWLKKHNLS (243 aa). 40 to 47 contacts ATP; the sequence is GHTGSGKS.

The protein belongs to the ABC transporter superfamily. Energy-coupling factor EcfA family. In terms of assembly, forms a stable energy-coupling factor (ECF) transporter complex composed of 2 membrane-embedded substrate-binding proteins (S component), 2 ATP-binding proteins (A component) and 2 transmembrane proteins (T component).

The protein localises to the cell membrane. ATP-binding (A) component of a common energy-coupling factor (ECF) ABC-transporter complex. Unlike classic ABC transporters this ECF transporter provides the energy necessary to transport a number of different substrates. The polypeptide is Energy-coupling factor transporter ATP-binding protein EcfA2 (Lactobacillus acidophilus (strain ATCC 700396 / NCK56 / N2 / NCFM)).